A 126-amino-acid polypeptide reads, in one-letter code: Large ribosomal subunit protein uL22 (126 aa).

The protein belongs to the universal ribosomal protein uL22 family. As to quaternary structure, part of the 50S ribosomal subunit.

In terms of biological role, this protein binds specifically to 23S rRNA; its binding is stimulated by other ribosomal proteins, e.g. L4, L17, and L20. It is important during the early stages of 50S assembly. It makes multiple contacts with different domains of the 23S rRNA in the assembled 50S subunit and ribosome. Its function is as follows. The globular domain of the protein is located near the polypeptide exit tunnel on the outside of the subunit, while an extended beta-hairpin is found that lines the wall of the exit tunnel in the center of the 70S ribosome. This is Large ribosomal subunit protein uL22 from Bradyrhizobium sp. (strain BTAi1 / ATCC BAA-1182).